Reading from the N-terminus, the 322-residue chain is Ethylmalonyl-CoA decarboxylase (322 aa).

Lysine 232 is subject to N6-acetyllysine; alternate. Lysine 232 is subject to N6-succinyllysine; alternate. An N6-succinyllysine modification is found at lysine 316.

It belongs to the enoyl-CoA hydratase/isomerase family.

Its subcellular location is the cytoplasm. The protein localises to the cytosol. It carries out the reaction (2S)-ethylmalonyl-CoA + H(+) = butanoyl-CoA + CO2. The catalysed reaction is (S)-methylmalonyl-CoA + H(+) = propanoyl-CoA + CO2. It catalyses the reaction (2R)-ethylmalonyl-CoA + H(+) = butanoyl-CoA + CO2. Functionally, decarboxylates ethylmalonyl-CoA, a potentially toxic metabolite, to form butyryl-CoA, suggesting it might be involved in metabolite proofreading. Acts preferentially on (S)-ethylmalonyl-CoA but also has some activity on the (R)-isomer. Also has methylmalonyl-CoA decarboxylase activity at lower level. In Mus musculus (Mouse), this protein is Ethylmalonyl-CoA decarboxylase (Echdc1).